Reading from the N-terminus, the 142-residue chain is Peptide methionine sulfoxide reductase MsrB (142 aa).

Positions 10–132 (EEEWKKVLTP…NSVSLNFKTE (123 aa)) constitute a MsrB domain. The Zn(2+) site is built by Cys-49, Cys-52, Cys-98, and Cys-101. Catalysis depends on Cys-121, which acts as the Nucleophile.

The protein belongs to the MsrB Met sulfoxide reductase family. Zn(2+) serves as cofactor.

The enzyme catalyses L-methionyl-[protein] + [thioredoxin]-disulfide + H2O = L-methionyl-(R)-S-oxide-[protein] + [thioredoxin]-dithiol. This Methanosarcina barkeri (strain Fusaro / DSM 804) protein is Peptide methionine sulfoxide reductase MsrB.